Here is a 459-residue protein sequence, read N- to C-terminus: Probable 1,4-beta-D-glucan cellobiohydrolase C (459 aa).

The N-terminal stretch at 1-18 (MHYPLSLALAFLPFGIQA) is a signal peptide. The 36-residue stretch at 19–54 (QQTLWGQCGGQGYSGATSCVAGATCATVNEYYAQCT) folds into the CBM1 domain. 2 cysteine pairs are disulfide-bonded: C26/C43 and C37/C53. The thr-rich linker stretch occupies residues 54-94 (TPAAGTSSATTLKTTTSSTTAAVTTTTTTQSPTGSASPTTT). Residues 76 to 97 (VTTTTTTQSPTGSASPTTTASA) form a disordered region. The interval 95-459 (ASASGNPFSG…QLLTNANPAF (365 aa)) is catalytic. Residue D189 is part of the active site. C190 and C249 are joined by a disulfide. D235 (proton donor) is an active-site residue. N303 carries N-linked (GlcNAc...) asparagine glycosylation. A disulfide bridge connects residues C381 and C428. Residue D414 is the Nucleophile of the active site.

Belongs to the glycosyl hydrolase 6 (cellulase B) family.

It is found in the secreted. It catalyses the reaction Hydrolysis of (1-&gt;4)-beta-D-glucosidic linkages in cellulose and cellotetraose, releasing cellobiose from the non-reducing ends of the chains.. Its function is as follows. The biological conversion of cellulose to glucose generally requires three types of hydrolytic enzymes: (1) Endoglucanases which cut internal beta-1,4-glucosidic bonds; (2) Exocellobiohydrolases that cut the disaccharide cellobiose from the non-reducing end of the cellulose polymer chain; (3) Beta-1,4-glucosidases which hydrolyze the cellobiose and other short cello-oligosaccharides to glucose. The polypeptide is Probable 1,4-beta-D-glucan cellobiohydrolase C (cbhC) (Aspergillus niger (strain ATCC MYA-4892 / CBS 513.88 / FGSC A1513)).